The primary structure comprises 1631 residues: ALK tyrosine kinase receptor (1631 aa).

Residues 1–18 form the signal peptide; it reads MGSVGLLGLLLLRLSVTA. At 19 to 1053 the chain is on the extracellular side; that stretch reads SGSGAGTGSG…PHLPLSLVLS (1035 aa). The disordered stretch occupies residues 20 to 53; sequence GSGAGTGSGTGSGTGTGTGQLVGSPATGPALQPR. Gly residues predominate over residues 21–39; that stretch reads SGAGTGSGTGSGTGTGTGQ. The tract at residues 60–82 is heparin-binding region; it reads RLQRKSLAVDFVVPSLFRVYARD. N-linked (GlcNAc...) asparagine glycans are attached at residues asparagine 185, asparagine 260, asparagine 301, asparagine 340, asparagine 427, asparagine 440, asparagine 461, asparagine 579, asparagine 587, and asparagine 643. Positions 280–443 constitute an MAM 1 domain; that stretch reads LECSFDFPCE…DFFALKNCSE (164 aa). Residues 494–652 enclose the MAM 2 domain; sequence FYCNFENGFC…NISISLDCYL (159 aa). Cysteine 703 and cysteine 716 are oxidised to a cystine. N-linked (GlcNAc...) asparagine glycosylation occurs at asparagine 724. The cysteines at positions 798 and 809 are disulfide-linked. 4 N-linked (GlcNAc...) asparagine glycosylation sites follow: asparagine 823, asparagine 878, asparagine 879, and asparagine 901. An intrachain disulfide couples cysteine 921 to cysteine 943. A glycan (N-linked (GlcNAc...) asparagine) is linked at asparagine 1001. Cystine bridges form between cysteine 1002/cysteine 1010, cysteine 1005/cysteine 1021, and cysteine 1023/cysteine 1036. The segment at 1002–1040 is EGF-like; sequence CSHCEGDECHMDPESHKVICFCDHGTVLAEDGVSCIVSP. A helical membrane pass occupies residues 1054–1074; the sequence is VVTSALVAALVLAFSGIMIVY. The Cytoplasmic portion of the chain corresponds to 1075–1631; that stretch reads RRKHQELQAM…DALLKTPPGP (557 aa). Residues 1131–1407 enclose the Protein kinase domain; sequence ITLIRGLGHG…IEYCTQDPDV (277 aa). ATP is bound by residues 1137–1145 and lysine 1165; that span reads LGHGAFGEV. Catalysis depends on aspartate 1264, which acts as the Proton acceptor. Disordered stretches follow at residues 1423–1493, 1526–1554, and 1609–1631; these read EEKV…GHVN, WFTE…REGS, and FEGT…PPGP.

As to quaternary structure, homodimer; homodimerizes following heparin- and ligand-binding. Interacts with CBL, IRS1, PIK3R1 and PLCG1. Interacts with FRS2 and SHC1. Interacts with PTN and MDK. Post-translationally, phosphorylated at tyrosine residues by autocatalysis, which activates kinase activity. In cells not stimulated by a ligand, receptor protein tyrosine phosphatase beta and zeta complex (PTPRB/PTPRZ1) dephosphorylates ALK at the sites in ALK that are undergoing autophosphorylation through autoactivation.

It localises to the cell membrane. It catalyses the reaction L-tyrosyl-[protein] + ATP = O-phospho-L-tyrosyl-[protein] + ADP + H(+). With respect to regulation, activated upon ALKAL2 ligand-binding. ALKAL2-driven activation is coupled with heparin-binding. Following ligand-binding, homodimerizes and autophosphorylates, activating its kinase activity. Inactivated through dephosphorylation by receptor protein tyrosine phosphatase beta and zeta complex (PTPRB/PTPRZ1) when there is no stimulation by a ligand. Its function is as follows. Neuronal receptor tyrosine kinase that is essentially and transiently expressed in specific regions of the central and peripheral nervous systems and plays an important role in the genesis and differentiation of the nervous system. Also acts as a key thinness protein involved in the resistance to weight gain: in hypothalamic neurons, controls energy expenditure acting as a negative regulator of white adipose tissue lipolysis and sympathetic tone to fine-tune energy homeostasis. Following activation by ALKAL2 ligand at the cell surface, transduces an extracellular signal into an intracellular response. In contrast, ALKAL1 is not a potent physiological ligand for ALK. Ligand-binding to the extracellular domain induces tyrosine kinase activation, leading to activation of the mitogen-activated protein kinase (MAPK) pathway. Phosphorylates almost exclusively at the first tyrosine of the Y-x-x-x-Y-Y motif. Induces tyrosine phosphorylation of CBL, FRS2, IRS1 and SHC1, as well as of the MAP kinases MAPK1/ERK2 and MAPK3/ERK1. ALK activation may also be regulated by pleiotrophin (PTN) and midkine (MDK). PTN-binding induces MAPK pathway activation, which is important for the anti-apoptotic signaling of PTN and regulation of cell proliferation. MDK-binding induces phosphorylation of the ALK target insulin receptor substrate (IRS1), activates mitogen-activated protein kinases (MAPKs) and PI3-kinase, resulting also in cell proliferation induction. Drives NF-kappa-B activation, probably through IRS1 and the activation of the AKT serine/threonine kinase. Recruitment of IRS1 to activated ALK and the activation of NF-kappa-B are essential for the autocrine growth and survival signaling of MDK. The polypeptide is ALK tyrosine kinase receptor (Canis lupus familiaris (Dog)).